A 293-amino-acid polypeptide reads, in one-letter code: 4-hydroxy-tetrahydrodipicolinate synthase (293 aa).

Pyruvate is bound at residue threonine 45. Catalysis depends on tyrosine 133, which acts as the Proton donor/acceptor. The Schiff-base intermediate with substrate role is filled by lysine 161. Isoleucine 203 contacts pyruvate.

This sequence belongs to the DapA family. As to quaternary structure, homotetramer; dimer of dimers.

It is found in the cytoplasm. It catalyses the reaction L-aspartate 4-semialdehyde + pyruvate = (2S,4S)-4-hydroxy-2,3,4,5-tetrahydrodipicolinate + H2O + H(+). It participates in amino-acid biosynthesis; L-lysine biosynthesis via DAP pathway; (S)-tetrahydrodipicolinate from L-aspartate: step 3/4. Catalyzes the condensation of (S)-aspartate-beta-semialdehyde [(S)-ASA] and pyruvate to 4-hydroxy-tetrahydrodipicolinate (HTPA). This is 4-hydroxy-tetrahydrodipicolinate synthase from Syntrophotalea carbinolica (strain DSM 2380 / NBRC 103641 / GraBd1) (Pelobacter carbinolicus).